The following is a 470-amino-acid chain: Putative multidrug resistance protein MdtD (470 aa).

Topologically, residues 1-11 are periplasmic; sequence MTELPDNTRWQ. The chain crosses the membrane as a helical span at residues 12-32; sequence LWIVAFGFFMQSLDTTIVNTA. Residues 33 to 48 are Cytoplasmic-facing; that stretch reads LPSMAKSLGESPLHMH. The chain crosses the membrane as a helical span at residues 49 to 69; that stretch reads MVVVSYVLTVAVMLPASGWLA. Residues 70 to 76 are Periplasmic-facing; it reads DKIGVRN. The helical transmembrane segment at 77–97 threads the bilayer; that stretch reads IFFAAIVLFTLGSLFCALSGT. At 98–101 the chain is on the cytoplasmic side; the sequence is LNQL. A helical membrane pass occupies residues 102-124; the sequence is VLARVLQGVGGAMMVPVGRLTVM. The Periplasmic portion of the chain corresponds to 125 to 137; it reads KIVPRAQYMAAMT. Residues 138-158 traverse the membrane as a helical segment; sequence FVTLPGQIGPLLGPALGGVLV. Residues 159–164 lie on the Cytoplasmic side of the membrane; it reads EYASWH. A helical transmembrane segment spans residues 165-185; the sequence is WIFLINIPVGIVGAMATFMLM. Over 186-196 the chain is Periplasmic; the sequence is PNYTIETRRFD. A helical transmembrane segment spans residues 197–217; it reads LPGFLLLAIGMAVLTLALDGS. The Cytoplasmic segment spans residues 218–224; that stretch reads KSMGISP. A helical membrane pass occupies residues 225-245; the sequence is WTLAGLAAGGAAAILLYLFHA. Topologically, residues 246–262 are periplasmic; sequence KKSSGALFSLRLFRTPT. A helical membrane pass occupies residues 263–283; the sequence is FSLGLLGSFAGRIGSGMLPFM. Topologically, residues 284-285 are cytoplasmic; that stretch reads TP. A helical membrane pass occupies residues 286-306; sequence VFLQIGLGFSPFHAGLMMIPM. Topologically, residues 307 to 341 are periplasmic; that stretch reads VLGSMGMKRIVVQIVNRFGYRRVLVATTLGLALVS. The chain crosses the membrane as a helical span at residues 342 to 362; that stretch reads LLFMSVALLGWYYLLPLVLLL. Residues 363-395 are Cytoplasmic-facing; that stretch reads QGMVNSARFSSMNTLTLKDLPDTLASSGNSLLS. A helical transmembrane segment spans residues 396–416; that stretch reads MIMQLSMSIGVTIAGMLLGMF. The Periplasmic segment spans residues 417–430; that stretch reads GQQHIGIDSSATHH. A helical membrane pass occupies residues 431 to 451; that stretch reads VFMYTWLCMAVIIALPAIIFA. Residues 452–470 lie on the Cytoplasmic side of the membrane; the sequence is RVPNDTQQNMVISRRKRSL.

The protein belongs to the major facilitator superfamily. TCR/Tet family.

The protein localises to the cell inner membrane. The protein is Putative multidrug resistance protein MdtD of Salmonella paratyphi A (strain ATCC 9150 / SARB42).